Reading from the N-terminus, the 207-residue chain is MRTHTVDHPLAAALLTTMRDERTPNAVFRAALCDLTGILVYEALREAPVDTYEINTPVAPATGARLAQPPLLVPVLRAGLGMVDAAAGLVPDARVGFVGIARDESTHQPVPYMESLPEDLAGVPVFVLDPMLATGGSMRHTLELLAARGATDITALCVVATPEGIATLERSGLPVRLVTAAVDEGLNENAYIVPGLGDAGDRQFGPR.

Residues Arg77, Arg102, and 129–137 contribute to the 5-phospho-alpha-D-ribose 1-diphosphate site; that span reads DPMLATGGS. Uracil-binding positions include Ile192 and 197–199; that span reads GDA. Position 198 (Asp198) interacts with 5-phospho-alpha-D-ribose 1-diphosphate.

It belongs to the UPRTase family. It depends on Mg(2+) as a cofactor.

It carries out the reaction UMP + diphosphate = 5-phospho-alpha-D-ribose 1-diphosphate + uracil. Its pathway is pyrimidine metabolism; UMP biosynthesis via salvage pathway; UMP from uracil: step 1/1. Its activity is regulated as follows. Allosterically activated by GTP. Its function is as follows. Catalyzes the conversion of uracil and 5-phospho-alpha-D-ribose 1-diphosphate (PRPP) to UMP and diphosphate. The chain is Uracil phosphoribosyltransferase from Nocardia farcinica (strain IFM 10152).